A 462-amino-acid polypeptide reads, in one-letter code: uncharacterized protein (462 aa).

The 59-residue stretch at 12 to 70 (MLKKNDIIQVAISDLSHEGAGVAKHDGFVFFVDNALPEEVIDMRVLKVNKNSGFGKVEA) folds into the TRAM domain. Residues Gln294, Tyr323, Glu344, and Asp392 each contribute to the S-adenosyl-L-methionine site. Catalysis depends on Cys419, which acts as the Nucleophile.

This sequence belongs to the class I-like SAM-binding methyltransferase superfamily. RNA M5U methyltransferase family.

This is an uncharacterized protein from Streptococcus pyogenes serotype M18 (strain MGAS8232).